The chain runs to 155 residues: Aspartate carbamoyltransferase regulatory chain (155 aa).

Residues Cys-113, Cys-118, Cys-139, and Cys-142 each coordinate Zn(2+).

This sequence belongs to the PyrI family. As to quaternary structure, contains catalytic and regulatory chains. It depends on Zn(2+) as a cofactor.

Its function is as follows. Involved in allosteric regulation of aspartate carbamoyltransferase. This chain is Aspartate carbamoyltransferase regulatory chain, found in Methanoculleus marisnigri (strain ATCC 35101 / DSM 1498 / JR1).